Reading from the N-terminus, the 334-residue chain is Malate dehydrogenase, cytoplasmic (334 aa).

The residue at position 2 (Ser2) is an N-acetylserine. NAD(+) contacts are provided by residues 11–17 (GAAGQIA) and Asp42. 2 residues coordinate substrate: Arg92 and Arg98. Asn105 serves as a coordination point for NAD(+). Residue Lys110 is modified to N6-succinyllysine. Gln112 is a binding site for NAD(+). An N6-acetyllysine mark is found at Lys118 and Lys121. 129–131 (VGN) serves as a coordination point for NAD(+). Residues Asn131 and Arg162 each coordinate substrate. The active-site Proton acceptor is the His187. N6-succinyllysine is present on Lys214. A Phosphoserine modification is found at Ser217. Omega-N-methylarginine is present on Arg230. Ser241 carries the phosphoserine modification. Lys298 bears the N6-acetyllysine; alternate mark. The residue at position 298 (Lys298) is an N6-succinyllysine; alternate. Ser309 is modified (phosphoserine). Residue Lys318 is modified to N6-succinyllysine. Phosphoserine is present on Ser333.

This sequence belongs to the LDH/MDH superfamily. MDH type 2 family. Homodimer. In terms of processing, ISGylated. Post-translationally, acetylation at Lys-118 dramatically enhances enzymatic activity and promotes adipogenic differentiation.

The protein localises to the cytoplasm. It localises to the cytosol. The catalysed reaction is (S)-malate + NAD(+) = oxaloacetate + NADH + H(+). It catalyses the reaction (2R)-2-hydroxy-3-(4-hydroxyphenyl)propanoate + NAD(+) = 3-(4-hydroxyphenyl)pyruvate + NADH + H(+). It carries out the reaction (S)-2-hydroxyglutarate + NAD(+) = 2-oxoglutarate + NADH + H(+). Catalyzes the reduction of aromatic alpha-keto acids in the presence of NADH. Plays essential roles in the malate-aspartate shuttle and the tricarboxylic acid cycle, important in mitochondrial NADH supply for oxidative phosphorylation. Catalyzes the reduction of 2-oxoglutarate to 2-hydroxyglutarate, leading to elevated reactive oxygen species (ROS). In Bos taurus (Bovine), this protein is Malate dehydrogenase, cytoplasmic (MDH1).